Consider the following 104-residue polypeptide: Putative protein 22K (104 aa).

A disordered region spans residues Tyr35–Lys104. Over residues Pro60–Glu78 the composition is skewed to acidic residues. A compositionally biased stretch (low complexity) spans Ser94–Lys104.

In Snake adenovirus serotype 1 (SnAdV-1), this protein is Putative protein 22K.